The sequence spans 508 residues: DNA polymerase II small subunit (508 aa).

Residues 66–80 show a composition bias toward low complexity; it reads ASSAAQTSAPASTPP. The tract at residues 66 to 122 is disordered; that stretch reads ASSAAQTSAPASTPPDEATTHTDPSATDTPPNHDGGRAATADARSVEIDGDMTGAST. Residues 86 to 95 are compositionally biased toward polar residues; it reads HTDPSATDTP.

Belongs to the DNA polymerase delta/II small subunit family. In terms of assembly, heterodimer of a large subunit and a small subunit.

It catalyses the reaction DNA(n) + a 2'-deoxyribonucleoside 5'-triphosphate = DNA(n+1) + diphosphate. It carries out the reaction Exonucleolytic cleavage in the 3'- to 5'-direction to yield nucleoside 5'-phosphates.. Possesses two activities: a DNA synthesis (polymerase) and an exonucleolytic activity that degrades single-stranded DNA in the 3' to 5' direction. Has a template-primer preference which is characteristic of a replicative DNA polymerase. The sequence is that of DNA polymerase II small subunit from Halobacterium salinarum (strain ATCC 29341 / DSM 671 / R1).